The following is a 578-amino-acid chain: SUMOylated effector protein AmpA (578 aa).

Residues 144–169 are disordered; it reads PQTVDPSVVESATGSGVDTQEEQEID. 3 tandem repeats follow at residues 180–272, 304–425, and 428–557. The interval 180–557 is 3 X approximate tandem repeats; sequence TEEQEVILEE…VEADAGMQQE (378 aa). The disordered stretch occupies residues 516 to 578; the sequence is VSVEADAGMQ…DPDDEDVLSY (63 aa).

Post-translationally, polysumoylated during infection on at least two lysine residues, in the N- and C-terminal section. SUMO2/3 modification of AmpA throughout the infection cycle is likely critical for bacterial intracellular survival, while terminal SUMO1 conjugation of AmpA may promote a late-stage infection cycle event. Only a small portion of the available AmpA pool is actually SUMOylated at any given time.

It is found in the secreted. The protein resides in the host membrane. The protein localises to the host cytoplasm. Its subcellular location is the host cytosol. Functionally, secreted effector that hijacks host cell SUMOylation during A.phagocytophilum infection and is important for the pathogen's intracellular survival. The polypeptide is SUMOylated effector protein AmpA (Anaplasma phagocytophilum (strain HZ)).